A 951-amino-acid polypeptide reads, in one-letter code: Serine/threonine-protein kinase 10 (951 aa).

Positions 36-294 constitute a Protein kinase domain; it reads WEIIGELGDG…AAQLLEHPFV (259 aa). ATP contacts are provided by residues 42-50 and lysine 65; that span reads LGDGAFGKV. Aspartate 157 serves as the catalytic Proton acceptor. Acidic residues predominate over residues 319 to 330; that stretch reads EENGEVEEEEAS. The disordered stretch occupies residues 319-479; sequence EENGEVEEEE…DSGSNSASES (161 aa). Over residues 331-343 the composition is skewed to polar residues; it reads DTPSSNKSVSQSA. The span at 345–356 shows a compositional bias: basic and acidic residues; it reads GEKDKHTGKEHV. Polar residues predominate over residues 364–373; the sequence is PQNTDSQADI. 2 stretches are compositionally biased toward basic and acidic residues: residues 374–394 and 410–427; these read HSQK…HDAV and HEPK…EEHG. Polar residues predominate over residues 429–443; it reads AVSSNQRPKSSQSDR. Phosphoserine; by PLK1 is present on residues serine 483, serine 487, and serine 491. Positions 583-723 form a coiled coil; that stretch reads EQEMNSKRKF…NKKQQLLRDR (141 aa). A compositionally biased stretch (basic and acidic residues) spans 785 to 800; it reads QERARLPKNQKAEAKT. The disordered stretch occupies residues 785 to 804; the sequence is QERARLPKNQKAEAKTRMTM. The stretch at 898–928 forms a coiled coil; that stretch reads RENLRPRKKALEDELEHKKEEQEMFFRMNEE. Residues 930 to 951 are disordered; sequence AGHPFPSNKPAKFYSFSSPEAS.

The protein belongs to the protein kinase superfamily. STE Ser/Thr protein kinase family. STE20 subfamily. As to quaternary structure, homodimer. Autophosphorylates. Phosphorylated by plk1/plx1, suggesting the existence of a feedback loop with plk1/plx1. activation of the protein.

It localises to the cell membrane. It carries out the reaction L-seryl-[protein] + ATP = O-phospho-L-seryl-[protein] + ADP + H(+). The enzyme catalyses L-threonyl-[protein] + ATP = O-phospho-L-threonyl-[protein] + ADP + H(+). Functionally, may act as a polo kinase kinase by mediating phosphorylation of plk1/plx1 and subsequent activation of plk1/plx1 during oocyte maturation. In Xenopus tropicalis (Western clawed frog), this protein is Serine/threonine-protein kinase 10 (stk10).